A 67-amino-acid polypeptide reads, in one-letter code: Coiled-coil domain-containing protein 179 (67 aa).

2 disordered regions span residues 1–32 (MCLR…RQSV) and 47–67 (RKLG…ILWT). A coiled-coil region spans residues 27–53 (STRQSVEKRINYMQNLQKEKRKLGKRF).

The sequence is that of Coiled-coil domain-containing protein 179 (Ccdc179) from Mus musculus (Mouse).